The following is a 185-amino-acid chain: Elongation factor P (185 aa).

The protein belongs to the elongation factor P family.

It is found in the cytoplasm. The protein operates within protein biosynthesis; polypeptide chain elongation. Functionally, involved in peptide bond synthesis. Stimulates efficient translation and peptide-bond synthesis on native or reconstituted 70S ribosomes in vitro. Probably functions indirectly by altering the affinity of the ribosome for aminoacyl-tRNA, thus increasing their reactivity as acceptors for peptidyl transferase. This Burkholderia vietnamiensis (strain G4 / LMG 22486) (Burkholderia cepacia (strain R1808)) protein is Elongation factor P.